We begin with the raw amino-acid sequence, 274 residues long: Nitrogenase iron protein (274 aa).

Residue 8 to 15 (GKGGIGKS) coordinates ATP. Position 94 (C94) interacts with [4Fe-4S] cluster. An ADP-ribosylarginine; by dinitrogenase reductase ADP-ribosyltransferase modification is found at R97. C131 contacts [4Fe-4S] cluster.

It belongs to the NifH/BchL/ChlL family. As to quaternary structure, homodimer. [4Fe-4S] cluster serves as cofactor. Post-translationally, the reversible ADP-ribosylation of Arg-97 inactivates the nitrogenase reductase and regulates nitrogenase activity.

It catalyses the reaction N2 + 8 reduced [2Fe-2S]-[ferredoxin] + 16 ATP + 16 H2O = H2 + 8 oxidized [2Fe-2S]-[ferredoxin] + 2 NH4(+) + 16 ADP + 16 phosphate + 6 H(+). Its function is as follows. The key enzymatic reactions in nitrogen fixation are catalyzed by the nitrogenase complex, which has 2 components: the iron protein and the molybdenum-iron protein. The sequence is that of Nitrogenase iron protein from Dehalococcoides mccartyi (strain ATCC BAA-2266 / KCTC 15142 / 195) (Dehalococcoides ethenogenes (strain 195)).